A 202-amino-acid polypeptide reads, in one-letter code: Adenosylcobalamin/alpha-ribazole phosphatase (202 aa).

The active-site Tele-phosphohistidine intermediate is His8. Catalysis depends on Glu81, which acts as the Proton donor/acceptor.

Belongs to the phosphoglycerate mutase family.

It catalyses the reaction adenosylcob(III)alamin 5'-phosphate + H2O = adenosylcob(III)alamin + phosphate. It carries out the reaction alpha-ribazole 5'-phosphate + H2O = alpha-ribazole + phosphate. Its pathway is nucleoside biosynthesis; alpha-ribazole biosynthesis; alpha-ribazole from 5,6-dimethylbenzimidazole: step 2/2. Its function is as follows. Catalyzes the conversion of adenosylcobalamin 5'-phosphate to adenosylcobalamin (vitamin B12); involved in the assembly of the nucleotide loop of cobalamin. Also catalyzes the hydrolysis of the phospho group from alpha-ribazole 5'-phosphate to form alpha-ribazole. This is Adenosylcobalamin/alpha-ribazole phosphatase (cobC) from Salmonella typhi.